Reading from the N-terminus, the 183-residue chain is Endoribonuclease YbeY (183 aa).

Histidine 143, histidine 147, and histidine 153 together coordinate Zn(2+).

Belongs to the endoribonuclease YbeY family. Requires Zn(2+) as cofactor.

It is found in the cytoplasm. Functionally, single strand-specific metallo-endoribonuclease involved in late-stage 70S ribosome quality control and in maturation of the 3' terminus of the 16S rRNA. The chain is Endoribonuclease YbeY from Rickettsia bellii (strain RML369-C).